The following is a 232-amino-acid chain: Large ribosomal subunit protein uL1 (232 aa).

It belongs to the universal ribosomal protein uL1 family. In terms of assembly, part of the 50S ribosomal subunit.

Its function is as follows. Binds directly to 23S rRNA. The L1 stalk is quite mobile in the ribosome, and is involved in E site tRNA release. Functionally, protein L1 is also a translational repressor protein, it controls the translation of the L11 operon by binding to its mRNA. The protein is Large ribosomal subunit protein uL1 of Cereibacter sphaeroides (strain ATCC 17025 / ATH 2.4.3) (Rhodobacter sphaeroides).